A 140-amino-acid chain; its full sequence is Bacilliredoxin STH2395 (140 aa).

Belongs to the bacilliredoxin family.

The polypeptide is Bacilliredoxin STH2395 (Symbiobacterium thermophilum (strain DSM 24528 / JCM 14929 / IAM 14863 / T)).